The chain runs to 619 residues: CREB-regulated transcription coactivator 3 (619 aa).

Positions 1–103 are required for interaction with HTLV-1 TAX; it reads MAASPGSGSA…LVERPSRNRF (103 aa). Phosphoserine occurs at positions 4 and 62. The interval 103 to 150 is disordered; sequence FHPLHRRSGDKPGRQFDGSAFGANYSSQPLDESWPRQQPPWKDEKHPG. Residue T160 is modified to Phosphothreonine. Phosphoserine; by SIK2 is present on S162. Over residues 165-175 the composition is skewed to polar residues; the sequence is ALHTSALSTKP. Positions 165–185 are disordered; it reads ALHTSALSTKPQDPYGGGGQS. K232 participates in a covalent cross-link: Glycyl lysine isopeptide (Lys-Gly) (interchain with G-Cter in SUMO2). S273, S329, S332, S370, S391, S396, S410, and S443 each carry phosphoserine. The tract at residues 375–431 is disordered; that stretch reads STTNLSGPSRRRQPPVSPLTLSPGPEAHQGFSRQLSSTSPLAPYPTSQMVSSDRSQL. The tract at residues 380 to 401 is required for interaction with PPP2CA and PPP2R1A; sequence SGPSRRRQPPVSPLTLSPGPEA. Residues 405-431 are compositionally biased toward polar residues; sequence FSRQLSSTSPLAPYPTSQMVSSDRSQL.

The protein belongs to the TORC family. Binding, as a tetramer, through its N-terminal region, with the bZIP domain of CREB1 enhances recruitment of TAF4 to the promoter. 'Arg-314' in the bZIP domain of CREB1 is essential for this interaction. Interacts (when phosphorylated at Ser-162 and Se-273) with 14-3-3 proteins. Interacts with YWHAE. Interacts (when phosphorylated at Ser-391) with phosphatase PP2A catalytic subunit PPP2CA and regulatory subunits PPP2R1A and PPP2R2A. Interacts, via the N-terminal with the ankyrin repeats of BCL3, to form a complex with CREB1 on CRE and TxRE responsive elements and represses HTLV-1 LTR-mediated transcription. In terms of assembly, (Microbial infection) Interacts with HTLV-1 protein Tax; this interaction enhances tax transcriptional activity. Phosphorylation/dephosphorylation states of Ser-273 are required for regulating transduction of CREB activity. CRTCs/TORCs are inactive when phosphorylated, and active when dephosphorylated at this site. May be phosphorylated at Ser-391 by MAPK3/ERK1 and/or MAPK1/ERK2 or by some cyclin-dependent kinases such as CDK1,CDK2 or CDK5. Following adenylyl cyclase activation, dephosphorylated at Ser-162 and Ser-273 resulting in its dissociation from 14-3-3 proteins probably promoting CRTC3 translocation into the nucleus. Predominantly expressed in B and T lymphocytes. Highest levels in lung. Also expressed in brain, colon, heart, kidney, ovary, and prostate. Weak expression in liver, pancreas, muscle, small intestine, spleen and stomach.

Its subcellular location is the nucleus. The protein localises to the cytoplasm. Its function is as follows. Transcriptional coactivator for CREB1 which activates transcription through both consensus and variant cAMP response element (CRE) sites. Acts as a coactivator, in the SIK/TORC signaling pathway, being active when dephosphorylated and acts independently of CREB1 'Ser-133' phosphorylation. Enhances the interaction of CREB1 with TAF4. Regulates the expression of specific CREB-activated genes such as the steroidogenic gene, StAR. Potent coactivator of PPARGC1A and inducer of mitochondrial biogenesis in muscle cells. Also coactivator for TAX activation of the human T-cell leukemia virus type 1 (HTLV-1) long terminal repeats (LTR). The sequence is that of CREB-regulated transcription coactivator 3 (CRTC3) from Homo sapiens (Human).